Here is a 319-residue protein sequence, read N- to C-terminus: Acetyl-coenzyme A carboxylase carboxyl transferase subunit alpha (319 aa).

Residues 34–295 (ELEEEVSKLK…KVRLKRDLAD (262 aa)) form the CoA carboxyltransferase C-terminal domain.

It belongs to the AccA family. Acetyl-CoA carboxylase is a heterohexamer composed of biotin carboxyl carrier protein (AccB), biotin carboxylase (AccC) and two subunits each of ACCase subunit alpha (AccA) and ACCase subunit beta (AccD).

It localises to the cytoplasm. It catalyses the reaction N(6)-carboxybiotinyl-L-lysyl-[protein] + acetyl-CoA = N(6)-biotinyl-L-lysyl-[protein] + malonyl-CoA. It functions in the pathway lipid metabolism; malonyl-CoA biosynthesis; malonyl-CoA from acetyl-CoA: step 1/1. Functionally, component of the acetyl coenzyme A carboxylase (ACC) complex. First, biotin carboxylase catalyzes the carboxylation of biotin on its carrier protein (BCCP) and then the CO(2) group is transferred by the carboxyltransferase to acetyl-CoA to form malonyl-CoA. This is Acetyl-coenzyme A carboxylase carboxyl transferase subunit alpha from Pseudoalteromonas translucida (strain TAC 125).